Consider the following 781-residue polypeptide: Penicillin-binding protein 1B (781 aa).

Residues 151-322 (FRLAPKLIAM…SLYNPWRNPQ (172 aa)) are transglycosylase. The active-site Proton donor; for transglycosylase activity is Glu-188. Positions 415-702 (SQLQLKMKNP…ALQIYKDYLN (288 aa)) are transpeptidase. Ser-466 serves as the catalytic Acyl-ester intermediate; for transpeptidase activity. Residues 749–768 (ETSSPSLTPTTETETPPQES) show a composition bias toward low complexity. The segment at 749-781 (ETSSPSLTPTTETETPPQESLWDVLDNPNPPAQ) is disordered.

The protein in the N-terminal section; belongs to the glycosyltransferase 51 family. It in the C-terminal section; belongs to the transpeptidase family.

It localises to the cell inner membrane. The catalysed reaction is [GlcNAc-(1-&gt;4)-Mur2Ac(oyl-L-Ala-gamma-D-Glu-L-Lys-D-Ala-D-Ala)](n)-di-trans,octa-cis-undecaprenyl diphosphate + beta-D-GlcNAc-(1-&gt;4)-Mur2Ac(oyl-L-Ala-gamma-D-Glu-L-Lys-D-Ala-D-Ala)-di-trans,octa-cis-undecaprenyl diphosphate = [GlcNAc-(1-&gt;4)-Mur2Ac(oyl-L-Ala-gamma-D-Glu-L-Lys-D-Ala-D-Ala)](n+1)-di-trans,octa-cis-undecaprenyl diphosphate + di-trans,octa-cis-undecaprenyl diphosphate + H(+). The enzyme catalyses Preferential cleavage: (Ac)2-L-Lys-D-Ala-|-D-Ala. Also transpeptidation of peptidyl-alanyl moieties that are N-acyl substituents of D-alanine.. The protein operates within cell wall biogenesis; peptidoglycan biosynthesis. Its function is as follows. Cell wall formation. Synthesis of cross-linked peptidoglycan from the lipid intermediates. The enzyme has a penicillin-insensitive transglycosylase N-terminal domain (formation of linear glycan strands) and a penicillin-sensitive transpeptidase C-terminal domain (cross-linking of the peptide subunits). The polypeptide is Penicillin-binding protein 1B (mrcB) (Haemophilus influenzae (strain ATCC 51907 / DSM 11121 / KW20 / Rd)).